Consider the following 2496-residue polypeptide: Non-reducing polyketide synthase adrD (2496 aa).

The tract at residues 15–254 (LVFGPQIAEI…HHASHITAVQ (240 aa)) is N-terminal acylcarrier protein transacylase domain (SAT). One can recognise a Ketosynthase family 3 (KS3) domain in the interval 387-808 (ATPIAITGMG…GSNAALVVKQ (422 aa)). Active-site for beta-ketoacyl synthase activity residues include Cys552, His687, and His726. The tract at residues 914–1223 (LCFGGQNGNE…QSLDLGGPQG (310 aa)) is malonyl-CoA:ACP transacylase (MAT) domain. Ser1001 (for acyl/malonyl transferase activity) is an active-site residue. Residues 1295 to 1423 (KEFVQLLTKQ…GEISLHPFGQ (129 aa)) form an N-terminal hotdog fold region. The 308-residue stretch at 1295–1602 (KEFVQLLTKQ…FTSVSIAGLA (308 aa)) folds into the PKS/mFAS DH domain. Residues 1296-1601 (EFVQLLTKQP…EFTSVSIAGL (306 aa)) form a product template (PT) domain region. His1326 serves as the catalytic Proton acceptor; for dehydratase activity. Residues 1451-1602 (ESSGLKGFAV…FTSVSIAGLA (152 aa)) are C-terminal hotdog fold. The active-site Proton donor; for dehydratase activity is Asp1509. The segment covering 1615-1629 (EKASPDLSLRNDSKV) has biased composition (basic and acidic residues). Residues 1615–1645 (EKASPDLSLRNDSKVDVNPTPQNTAPVVQPT) are disordered. Residues 1633–1645 (PTPQNTAPVVQPT) show a composition bias toward polar residues. The 75-residue stretch at 1652 to 1726 (PGYFVVVQEM…ALVQTIFPDA (75 aa)) folds into the Carrier domain. Ser1686 is subject to O-(pantetheine 4'-phosphoryl)serine. A methyltransferase (CMeT) domain region spans residues 1888–2121 (QHRSEHHLLK…GFQWVDWTHN (234 aa)). Residues 2151-2496 (RVMNEETVPY…YEFLRDHVRY (346 aa)) form a thioesterase (TE) domain region. Active-site for thioesterase activity residues include Ser2274 and Asp2433.

The enzyme catalyses 3 malonyl-CoA + acetyl-CoA + 2 S-adenosyl-L-methionine = 3,5-dimethylorsellinate + 2 S-adenosyl-L-homocysteine + 3 CO2 + 4 CoA. Its pathway is secondary metabolite biosynthesis; terpenoid biosynthesis. Functionally, non-reducing polyketide synthase; part of the gene cluster that mediates the biosynthesis of andrastins, meroterpenoid compounds that exhibit inhibitory activity against ras farnesyltransferase, suggesting that they could be promising leads for antitumor agents. The first step of the pathway is the synthesis of 3,5-dimethylorsellinic acid (DMOA) by the polyketide synthase adrD via condensation of one acetyl-CoA starter unit with 3 malonyl-CoA units and 2 methylations. DMAO is then converted to farnesyl-DMAO by the prenyltransferase adrG. The methyltransferase adrK catalyzes the methylation of the carboxyl group of farnesyl-DMAO to farnesyl-DMAO methyl ester which is further converted to epoxyfarnesyl-DMAO methyl ester by the FAD-dependent monooxygenase adrH. The terpene cyclase adrI then catalyzes the carbon skeletal rearrangement to generate the andrastin E, the first compound in the pathway having the andrastin scaffold, with the tetracyclic ring system. The post-cyclization tailoring enzymes adrF, adrE, adrJ, and adrA, are involved in the conversion of andrastin E into andrastin A. The short chain dehydrogenase adrF is responsible for the oxidation of the C-3 a hydroxyl group of andrastin E to yield the corresponding ketone, andrastin D. The ketoreductase adrE stereoselectively reduces the carbonyl moiety to reverse the stereochemistry of the C-3 position to yield andrastin F. The acetyltransferase adrJ is the acetyltransferase that attaches the acetyl group to the C-3 hydroxyl group of andrastin F to yield andrastin C. Finally, the cytochrome P450 monooxygenase adrA catalyzes two sequential oxidation reactions of the C-23 methyl group, to generate the corresponding alcohol andrastin B, and aldehyde andrastin A. This Penicillium rubens (strain ATCC 28089 / DSM 1075 / NRRL 1951 / Wisconsin 54-1255) (Penicillium chrysogenum) protein is Non-reducing polyketide synthase adrD.